The primary structure comprises 408 residues: Arginine biosynthesis bifunctional protein ArgJ (408 aa).

6 residues coordinate substrate: T156, K182, T193, E279, N403, and S408. The active-site Nucleophile is T193.

This sequence belongs to the ArgJ family. In terms of assembly, heterotetramer of two alpha and two beta chains.

It is found in the cytoplasm. The catalysed reaction is N(2)-acetyl-L-ornithine + L-glutamate = N-acetyl-L-glutamate + L-ornithine. It catalyses the reaction L-glutamate + acetyl-CoA = N-acetyl-L-glutamate + CoA + H(+). The protein operates within amino-acid biosynthesis; L-arginine biosynthesis; L-ornithine and N-acetyl-L-glutamate from L-glutamate and N(2)-acetyl-L-ornithine (cyclic): step 1/1. It participates in amino-acid biosynthesis; L-arginine biosynthesis; N(2)-acetyl-L-ornithine from L-glutamate: step 1/4. Catalyzes two activities which are involved in the cyclic version of arginine biosynthesis: the synthesis of N-acetylglutamate from glutamate and acetyl-CoA as the acetyl donor, and of ornithine by transacetylation between N(2)-acetylornithine and glutamate. The chain is Arginine biosynthesis bifunctional protein ArgJ from Bordetella pertussis (strain Tohama I / ATCC BAA-589 / NCTC 13251).